The sequence spans 451 residues: Tubulin beta-1 chain (451 aa).

Positions 11, 73, 142, 146, 147, 148, 208, and 230 each coordinate GTP. Glu-73 contributes to the Mg(2+) binding site. The tract at residues 430 to 451 (QEATADDEAEFEEEGEVEGEYA) is disordered. A compositionally biased stretch (acidic residues) spans 433–451 (TADDEAEFEEEGEVEGEYA).

This sequence belongs to the tubulin family. In terms of assembly, dimer of alpha and beta chains. A typical microtubule is a hollow water-filled tube with an outer diameter of 25 nm and an inner diameter of 15 nM. Alpha-beta heterodimers associate head-to-tail to form protofilaments running lengthwise along the microtubule wall with the beta-tubulin subunit facing the microtubule plus end conferring a structural polarity. Microtubules usually have 13 protofilaments but different protofilament numbers can be found in some organisms and specialized cells. Requires Mg(2+) as cofactor.

It is found in the cytoplasm. The protein resides in the cytoskeleton. Tubulin is the major constituent of microtubules, a cylinder consisting of laterally associated linear protofilaments composed of alpha- and beta-tubulin heterodimers. Microtubules grow by the addition of GTP-tubulin dimers to the microtubule end, where a stabilizing cap forms. Below the cap, tubulin dimers are in GDP-bound state, owing to GTPase activity of alpha-tubulin. This Homarus americanus (American lobster) protein is Tubulin beta-1 chain.